The following is a 1091-amino-acid chain: ATP-citrate synthase (1091 aa).

Residues 4 to 265 (KAISEQTGKE…LDAKSGASLK (262 aa)) form the ATP-grasp domain. 6 residues coordinate ATP: lysine 58, arginine 66, glycine 67, proline 109, valine 111, and glutamate 118. Phosphotyrosine is present on tyrosine 131. Aspartate 216 provides a ligand contact to ATP. Residues aspartate 257, serine 260, and alanine 262 each contribute to the Mg(2+) site. The residue at position 263 (serine 263) is a Phosphoserine. 5 residues coordinate citrate: glycine 309, asparagine 346, threonine 348, tyrosine 364, and arginine 379. A compositionally biased stretch (low complexity) spans 442 to 457 (SGSTSTPAPSRTASFS). A disordered region spans residues 442–478 (SGSTSTPAPSRTASFSESRADEVAPAKKAKPAMPQGK). Threonine 447 is modified (phosphothreonine). The residue at position 451 (serine 451) is a Phosphoserine. Serine 455 carries the post-translational modification Phosphoserine; by PKA and PKB/AKT1 or PKB/AKT2 or BCKDK. Serine 459 carries the phosphoserine modification. N6-acetyllysine; alternate occurs at positions 530, 536, and 544. Residues lysine 530, lysine 536, and lysine 544 each participate in a glycyl lysine isopeptide (Lys-Gly) (interchain with G-Cter in ubiquitin); alternate cross-link. A Phosphothreonine modification is found at threonine 629. Position 653 is a phosphoserine (serine 653). The residue at position 672 (tyrosine 672) is a Phosphotyrosine. Catalysis depends on histidine 750, which acts as the Tele-phosphohistidine intermediate. 769–779 (LKEAGVFVPRS) is a binding site for CoA. Serine 829 bears the Phosphoserine mark. Residues lysine 938, lysine 958, lysine 968, and lysine 1067 each carry the N6-acetyllysine modification. Serine 1090 bears the Phosphoserine mark.

The protein in the N-terminal section; belongs to the succinate/malate CoA ligase beta subunit family. This sequence in the C-terminal section; belongs to the succinate/malate CoA ligase alpha subunit family. As to quaternary structure, homotetramer. It depends on Mg(2+) as a cofactor. Phosphorylated by PKA and GSK3 in a sequential manner; phosphorylation results in activation of its activity. Phosphorylation on Thr-447 and Ser-451 depends on the phosphorylation state of Ser-455. Phosphorylation on Ser-455 is decreased by prior phosphorylation on the other 2 residues. Phosphorylated at Ser-455 by BCKDK and dephosphorylated by protein phosphatase PPM1K. Post-translationally, ISGylated. In terms of processing, acetylated at Lys-530, Lys-536 and Lys-544 by KAT2B/PCAF. Acetylation is promoted by glucose and stabilizes the protein, probably by preventing ubiquitination at the same sites. Acetylation promotes de novo lipid synthesis. Deacetylated by SIRT2. Ubiquitinated at Lys-530, Lys-536 and Lys-544 by the BCR(KLHL25) E3 ubiquitin ligase complex and UBR4, leading to its degradation. Ubiquitination is probably inhibited by acetylation at same site. BCR(KLHL25)-mediated degradation of ACLY promotes fatty acid oxidation and is required for differentiation of inducible regulatory T (iTreg) cells.

Its subcellular location is the cytoplasm. It is found in the cytosol. It carries out the reaction oxaloacetate + acetyl-CoA + ADP + phosphate = citrate + ATP + CoA. Its activity is regulated as follows. Phosphorylation results in activation of its activity. Glucose 6-phosphate, fructose 6-phosphate, fructose 2,6-bisphosphate, ribulose 5-phosphate, and fructose 1,6-bisphosphate also act as activators. Catalyzes the cleavage of citrate into oxaloacetate and acetyl-CoA, the latter serving as common substrate in multiple biochemical reactions in protein, carbohydrate and lipid metabolism. In Mus musculus (Mouse), this protein is ATP-citrate synthase (Acly).